The chain runs to 270 residues: MFRNQYDTDVTTWSPAGRLFQVEYAMEAVKQGSACVGLRSRTHAVLAAANKAASELSSHQRKVFRVADHAGVALAGLTADGRVLSRFLRSECINHAFVYDAPLPVSRLALRLADKAQVCTQRSWKRPYGVGLLVAGLDESGAHLYYNCPSGNYFEYQAFAIGSRSQAAKTFLERRFEGYNDYTPEQLIKDALSAIKETLQGEKLTSSNCTVAIVGRKDDGTVEPFEMIDVKRIQEIIDSMEAAEEAPAAEAESSSMQEEDKGTDAAPMDI.

A disordered region spans residues 239–270; the sequence is SMEAAEEAPAAEAESSSMQEEDKGTDAAPMDI. The span at 245-256 shows a compositional bias: low complexity; it reads EAPAAEAESSSM.

This sequence belongs to the peptidase T1A family. The 26S proteasome consists of a 20S proteasome core and two 19S regulatory subunits. The 20S proteasome core is composed of 28 subunits that are arranged in four stacked rings, resulting in a barrel-shaped structure. The two end rings are each formed by seven alpha subunits, and the two central rings are each formed by seven beta subunits. The catalytic chamber with the active sites is on the inside of the barrel.

It localises to the cytoplasm. The protein localises to the nucleus. Its function is as follows. The proteasome is a multicatalytic proteinase complex which is characterized by its ability to cleave peptides with Arg, Phe, Tyr, Leu, and Glu adjacent to the leaving group at neutral or slightly basic pH. The proteasome has an ATP-dependent proteolytic activity. This chain is Proteasome subunit alpha type-1 (PAF1), found in Oryza sativa subsp. japonica (Rice).